The chain runs to 334 residues: MERCSVAQQFEDKFHRKFYYLRLSVTDVCNFKCTYCLPDGYKPSGNKNSSFLSLPEIKRVVKAFADCGTSKVRITGGEPSLRKDFTDIIHSVATTPGIKKVATTTNGYRMAKQVADWREAGLTNINVSVDSLDPRMFHQITGENKFTEVMNGIERAFEVGYEQVKVNVVLMKDLNHHELPAFLNWIKDRPIQLRFIELMQTGEMDDLFSKHHVSGVAIRNQLIANGWLLKVRSHHDGPAQVFVHPDYKGEIGLIMPYEKDFCESCNRLRVSALGKLHLCLFGEHGVELRDLLERDDQENELIERIQSQLQTKSVSHFLHDGNTGMTPHLASIGG.

The region spanning 13-239 is the Radical SAM core domain; sequence KFHRKFYYLR…KVRSHHDGPA (227 aa). GTP is bound at residue Arg22. Residues Cys29 and Cys33 each contribute to the [4Fe-4S] cluster site. Tyr35 is an S-adenosyl-L-methionine binding site. Cys36 lines the [4Fe-4S] cluster pocket. Arg73 is a GTP binding site. Residue Gly77 participates in S-adenosyl-L-methionine binding. Thr104 provides a ligand contact to GTP. Ser128 lines the S-adenosyl-L-methionine pocket. Lys165 provides a ligand contact to GTP. Met199 provides a ligand contact to S-adenosyl-L-methionine. [4Fe-4S] cluster is bound by residues Cys262 and Cys265. 267–269 contributes to the GTP binding site; that stretch reads RLR. Residue Cys279 participates in [4Fe-4S] cluster binding.

Belongs to the radical SAM superfamily. MoaA family. As to quaternary structure, monomer and homodimer. The cofactor is [4Fe-4S] cluster.

It carries out the reaction GTP + AH2 + S-adenosyl-L-methionine = (8S)-3',8-cyclo-7,8-dihydroguanosine 5'-triphosphate + 5'-deoxyadenosine + L-methionine + A + H(+). It participates in cofactor biosynthesis; molybdopterin biosynthesis. In terms of biological role, catalyzes the cyclization of GTP to (8S)-3',8-cyclo-7,8-dihydroguanosine 5'-triphosphate. This chain is GTP 3',8-cyclase, found in Vibrio parahaemolyticus serotype O3:K6 (strain RIMD 2210633).